The chain runs to 227 residues: uncharacterized protein (227 aa).

This sequence belongs to the flavoredoxin family. The cofactor is FMN.

This is an uncharacterized protein from Deinococcus radiodurans (strain ATCC 13939 / DSM 20539 / JCM 16871 / CCUG 27074 / LMG 4051 / NBRC 15346 / NCIMB 9279 / VKM B-1422 / R1).